Consider the following 249-residue polypeptide: Sec-independent protein translocase protein TatC (249 aa).

6 consecutive transmembrane segments (helical) span residues 18–38 (VSVG…KNIF), 69–89 (AIVI…APGL), 96–116 (VILP…AFSY), 151–171 (LILG…LAKV), 187–207 (IVVI…SQIF), and 208–228 (MALP…MVNP).

The protein belongs to the TatC family. In terms of assembly, the Tat system comprises two distinct complexes: a TatABC complex, containing multiple copies of TatA, TatB and TatC subunits, and a separate TatA complex, containing only TatA subunits. Substrates initially bind to the TatABC complex, which probably triggers association of the separate TatA complex to form the active translocon.

It localises to the cell inner membrane. Part of the twin-arginine translocation (Tat) system that transports large folded proteins containing a characteristic twin-arginine motif in their signal peptide across membranes. Together with TatB, TatC is part of a receptor directly interacting with Tat signal peptides. The sequence is that of Sec-independent protein translocase protein TatC from Helicobacter pylori (strain J99 / ATCC 700824) (Campylobacter pylori J99).